The following is a 338-amino-acid chain: Nucleoid-associated protein PM1885 (338 aa).

The protein belongs to the YejK family.

The protein localises to the cytoplasm. The protein resides in the nucleoid. The polypeptide is Nucleoid-associated protein PM1885 (Pasteurella multocida (strain Pm70)).